Reading from the N-terminus, the 1070-residue chain is DNA-directed RNA polymerase subunit beta (1070 aa).

The protein belongs to the RNA polymerase beta chain family. In terms of assembly, in plastids the minimal PEP RNA polymerase catalytic core is composed of four subunits: alpha, beta, beta', and beta''. When a (nuclear-encoded) sigma factor is associated with the core the holoenzyme is formed, which can initiate transcription.

It localises to the plastid. The protein localises to the chloroplast. The catalysed reaction is RNA(n) + a ribonucleoside 5'-triphosphate = RNA(n+1) + diphosphate. Functionally, DNA-dependent RNA polymerase catalyzes the transcription of DNA into RNA using the four ribonucleoside triphosphates as substrates. This Nicotiana sylvestris (Wood tobacco) protein is DNA-directed RNA polymerase subunit beta.